The sequence spans 214 residues: Transcription factor 23 (214 aa).

Disordered stretches follow at residues 1–86 (MSQR…ARER) and 174–214 (DSTT…LGDK). Residues 40-49 (TRQDPWEERS) are compositionally biased toward basic and acidic residues. One can recognise a bHLH domain in the interval 76 to 128 (EASPENAARERSRVRTLRQAFLALQAALPAVPPDTKLSKLDVLVLAASYIAHL). The segment covering 174–183 (DSTTASTPSQ) has biased composition (polar residues).

Forms inactive heterodimeric complexes with TCF3. In terms of tissue distribution, expressed in liver, kidney and spleen.

Its subcellular location is the nucleus. Its function is as follows. Inhibits E-box-mediated binding and transactivation of bHLH factors. Inhibitory effect is similar to that of ID proteins. Inhibits the formation of TCF3 and MYOD1 homodimers and heterodimers. Lacks DNA binding activity. Seems to play a role in the inhibition of myogenesis. The polypeptide is Transcription factor 23 (TCF23) (Homo sapiens (Human)).